Here is a 504-residue protein sequence, read N- to C-terminus: Catalase (504 aa).

Residues 1 to 25 are disordered; the sequence is MSKQDGKLTGLFGAPVSDRENSMTA. Active-site residues include H56 and N129. Y339 lines the heme pocket.

It belongs to the catalase family. In terms of assembly, homodimer. Requires heme as cofactor.

It catalyses the reaction 2 H2O2 = O2 + 2 H2O. Decomposes hydrogen peroxide into water and oxygen; serves to protect cells from the toxic effects of hydrogen peroxide. The sequence is that of Catalase (katA) from Staphylococcus epidermidis (strain ATCC 35984 / DSM 28319 / BCRC 17069 / CCUG 31568 / BM 3577 / RP62A).